Consider the following 341-residue polypeptide: HTH-type transcriptional repressor PurR (341 aa).

Residues 2-56 form the HTH lacI-type domain; it reads ATIKDVAKHAGVSTTTVSHVINKTRFVAENTKAAVWAAIKELHYSPSAVARSLKV. Positions 4 to 23 form a DNA-binding region, H-T-H motif; that stretch reads IKDVAKHAGVSTTTVSHVIN. Residues 48-56 mediate DNA binding; it reads SAVARSLKV. Hypoxanthine is bound by residues Tyr73, Arg190, Thr192, Phe221, and Asp275.

As to quaternary structure, homodimer.

Its pathway is purine metabolism; purine nucleotide biosynthesis [regulation]. Functionally, is the main repressor of the genes involved in the de novo synthesis of purine nucleotides, regulating purB, purC, purEK, purF, purHD, purL, purMN and guaBA expression. PurR is allosterically activated to bind its cognate DNA by binding the purine corepressors, hypoxanthine or guanine, thereby effecting transcription repression. The polypeptide is HTH-type transcriptional repressor PurR (Yersinia pseudotuberculosis serotype O:1b (strain IP 31758)).